The primary structure comprises 244 residues: Transcriptional regulatory protein YpdB (244 aa).

Residues Lys2–Glu116 enclose the Response regulatory domain. A 4-aspartylphosphate modification is found at Asp53. Positions Ile139–Leu244 constitute an HTH LytTR-type domain.

In terms of processing, phosphorylated by YpdA.

The protein resides in the cytoplasm. Member of the two-component regulatory system YpdA/YpdB. YpdB regulates expression of yhjX by binding to its promoter region. This chain is Transcriptional regulatory protein YpdB (ypdB), found in Escherichia coli O157:H7.